The sequence spans 484 residues: RuvB-like helicase 1 (484 aa).

Residues 1-11 (MSMAASSSTAT) are compositionally biased toward low complexity. The segment at 1 to 27 (MSMAASSSTATVQPSGIITQPPPPSTL) is disordered. 87 to 94 (GPPGTGKT) serves as a coordination point for ATP.

This sequence belongs to the RuvB family. In terms of assembly, may form heterododecamers with RVB2. Component of the SWR1 chromatin remodeling complex, the INO80 chromatin remodeling complex, and of the R2TP complex.

It is found in the nucleus. The enzyme catalyses ATP + H2O = ADP + phosphate + H(+). Functionally, DNA helicase which participates in several chromatin remodeling complexes, including the SWR1 and the INO80 complexes. The SWR1 complex mediates the ATP-dependent exchange of histone H2A for the H2A variant HZT1 leading to transcriptional regulation of selected genes by chromatin remodeling. The INO80 complex remodels chromatin by shifting nucleosomes and is involved in DNA repair. Also involved in pre-rRNA processing. The sequence is that of RuvB-like helicase 1 (RVB1) from Cryptococcus neoformans var. neoformans serotype D (strain B-3501A) (Filobasidiella neoformans).